The primary structure comprises 845 residues: Cadherin-related family member 5 (845 aa).

Residues 1-25 (MGSWALLWPPLLFTGLLVRPPGTMA) form the signal peptide. Residues 26-669 (QAQYCSVNKD…DKRFSVVDMA (644 aa)) are Extracellular-facing. N44, N81, N140, N198, N297, N308, and N405 each carry an N-linked (GlcNAc...) asparagine glycan. 4 consecutive Cadherin domains span residues 71–124 (FRIQ…APEF), 125–237 (PFKT…PPWF), 249–354 (IQAQ…PPRF), and 355–459 (PQRL…PPST). The tract at residues 452–661 (SEQEPPSTDV…SSGGGPSEDK (210 aa)) is disordered. Residues 506-518 (SGTTLRPPTSSTP) show a composition bias toward low complexity. Residue N526 is glycosylated (N-linked (GlcNAc...) asparagine). Composition is skewed to polar residues over residues 539–549 (TAQTPKPGTSQ), 556–594 (GTST…SHQP), and 602–611 (AQTPEAGTSQ). 3 tandem repeats follow at residues 540-570 (AQTP…SGGT), 571-601 (AQTP…GGGT), and 602-631 (AQTP…PGGG). The interval 540–645 (AQTPKPGTSQ…PEPGTSQPMP (106 aa)) is 4 X 31 AA approximate tandem repeats. A 4; truncated repeat occupies 632-645 (TAQTPEPGTSQPMP). Residues 633–652 (AQTPEPGTSQPMPLSKSTPS) are compositionally biased toward low complexity. Residues 670-690 (ALGGVLGALLLLALLGLAVLV) traverse the membrane as a helical segment. Residues 691–845 (HKHYGPRLKC…DAPGGDDSYI (155 aa)) lie on the Cytoplasmic side of the membrane. Positions 691–845 (HKHYGPRLKC…DAPGGDDSYI (155 aa)) are mediates interaction with USH1C and MYO7B and is required for proper localization to microvilli tips and function in microvilli organization. The tract at residues 724–789 (ANWAPVPSPT…KERRPEGGYK (66 aa)) is disordered. Residues 729–762 (VPSPTHDPKPAEAPMPAEPAPPGPASPGGAPEPP) are compositionally biased toward pro residues. S770 is modified (phosphoserine). T810 carries the post-translational modification Phosphothreonine. Positions 811–845 (LDVDGASDSGSGDEGEGAGRGGGPYDAPGGDDSYI) are disordered. Phosphoserine occurs at positions 817, 819, and 821. Residues 835–845 (YDAPGGDDSYI) show a composition bias toward low complexity.

In terms of assembly, part of the IMAC/intermicrovillar adhesion complex/intermicrovillar tip-link complex composed of ANKS4B, MYO7B, USH1C, CDHR2 and CDHR5. Interacts (via cytoplasmic domain) with USH1C and MYO7B; required for proper localization of CDHR5 to microvilli tips and its function in brush border differentiation. In terms of processing, N- and O-glycosylated. Highest expression in kidney, liver, colon and small intestine. In kidney, expressed apically along brush border of proximal convoluted tubule but not in cortical collecting ducts. Isoform 1 is expressed primarily in adult small intestine and colon. Isoform 2 is highly expressed in fetal liver. Expressed in duodenum with higher expression in enterocytes along the villus axis and lower expression in crypts (at protein level).

Its subcellular location is the apical cell membrane. The protein resides in the cell projection. It localises to the microvillus membrane. Its function is as follows. Intermicrovillar adhesion molecule that forms, via its extracellular domain, calcium-dependent heterophilic complexes with CDHR2 on adjacent microvilli. Thereby, controls the packing of microvilli at the apical membrane of epithelial cells. Through its cytoplasmic domain, interacts with microvillus cytoplasmic proteins to form the intermicrovillar adhesion complex/IMAC. This complex plays a central role in microvilli and epithelial brush border differentiation. The protein is Cadherin-related family member 5 of Homo sapiens (Human).